Reading from the N-terminus, the 368-residue chain is uncharacterized protein (368 aa).

It belongs to the YCR102c/YLR460c/YNL134c family.

This is an uncharacterized protein from Saccharomyces cerevisiae (strain ATCC 204508 / S288c) (Baker's yeast).